The sequence spans 291 residues: Probable peptide ABC transporter permease protein y4tQ (291 aa).

5 consecutive transmembrane segments (helical) span residues 28–48 (LVLLGGGILLLLILLALAAPL), 92–112 (LIVGLLSAVCAAVCGLLIGVI), 137–157 (LLAIALLSLTGPGIGILIVAI), 213–233 (ATVCASAIMTEAGLSFIGVGV), and 249–269 (LFLAIAPLTIFAPGLCLAVTV). In terms of domain architecture, ABC transmembrane type-1 spans 88–276 (ARISLIVGLL…VTVLAVNLLG (189 aa)).

Belongs to the binding-protein-dependent transport system permease family. OppBC subfamily.

The protein localises to the cell inner membrane. Probably part of the binding-protein-dependent transport system y4tOPQRS for a peptide. Probably responsible for the translocation of the substrate across the membrane. The sequence is that of Probable peptide ABC transporter permease protein y4tQ from Sinorhizobium fredii (strain NBRC 101917 / NGR234).